A 382-amino-acid polypeptide reads, in one-letter code: Chaperone protein DnaJ (382 aa).

A J domain is found at 5–70; the sequence is DYYETLGVSR…NKRAAYDRYG (66 aa). The CR-type zinc finger occupies 140 to 218; the sequence is GKTAQIRVPT…CHGQGRITEE (79 aa). The Zn(2+) site is built by Cys-153, Cys-156, Cys-170, Cys-173, Cys-192, Cys-195, Cys-206, and Cys-209. CXXCXGXG motif repeat units follow at residues 153–160, 170–177, 192–199, and 206–213; these read CDVCSGSG, CGTCQGSG, CPTCHGRG, and CGKCHGQG.

This sequence belongs to the DnaJ family. In terms of assembly, homodimer. Zn(2+) serves as cofactor.

The protein localises to the cytoplasm. In terms of biological role, participates actively in the response to hyperosmotic and heat shock by preventing the aggregation of stress-denatured proteins and by disaggregating proteins, also in an autonomous, DnaK-independent fashion. Unfolded proteins bind initially to DnaJ; upon interaction with the DnaJ-bound protein, DnaK hydrolyzes its bound ATP, resulting in the formation of a stable complex. GrpE releases ADP from DnaK; ATP binding to DnaK triggers the release of the substrate protein, thus completing the reaction cycle. Several rounds of ATP-dependent interactions between DnaJ, DnaK and GrpE are required for fully efficient folding. Also involved, together with DnaK and GrpE, in the DNA replication of plasmids through activation of initiation proteins. This Rhizobium rhizogenes (strain K84 / ATCC BAA-868) (Agrobacterium radiobacter) protein is Chaperone protein DnaJ.